Consider the following 71-residue polypeptide: Lantibiotic Flvbeta.c (71 aa).

Residues 1 to 33 (MENKFDMEKFKKLAAVVSEDELDTLLDETTVGA) constitute a propeptide, cleaved by FlvT. The lanthionine (Ser-Cys); by FlvM2 cross-link spans 35 to 39 (SSNDC). A 2,3-didehydroalanine (Ser); by FlvM2 modification is found at Ser-36. 3 consecutive cross-links (beta-methyllanthionine (Thr-Cys); by FlvM2) follow at residues 54-60 (TSKFDWC), 62-65 (TGAC), and 66-69 (TTSC).

Post-translationally, contains LL-lanthionine and DL-beta-methyllanthionine, when coepressed in E.coli with the flavecin synthetase FlvM2.

Its subcellular location is the secreted. Functionally, lanthionine-containing peptide antibiotic (lantibiotic) that is probably active on Gram-positive bacteria, since its analog [Del1]Flvbeta.c shows antibacterial activity against M.luteus. This activity is not synergistically enhanced by [Del2]Flvalpha.a, an analog of Flvalpha.a, which is encoded by the same operon than Flvbeta.c. The bactericidal activity of lantibiotics is based on depolarization of energized bacterial cytoplasmic membranes, initiated by the formation of aqueous transmembrane pores. In Ruminococcus flavefaciens, this protein is Lantibiotic Flvbeta.c.